The sequence spans 334 residues: Ketol-acid reductoisomerase (NADP(+)) (334 aa).

Positions 2-181 constitute a KARI N-terminal Rossmann domain; the sequence is TKVYYDQSVE…GATRAGVIET (180 aa). NADP(+)-binding positions include 25 to 28, arginine 48, serine 52, and 82 to 85; these read YGSQ and DEIQ. Residue histidine 107 is part of the active site. Glycine 133 contributes to the NADP(+) binding site. Residues 182–327 enclose the KARI C-terminal knotted domain; that stretch reads TFKEETETDL…RELRKMMPFI (146 aa). Positions 190, 194, 226, and 230 each coordinate Mg(2+). Residue serine 251 coordinates substrate.

This sequence belongs to the ketol-acid reductoisomerase family. Requires Mg(2+) as cofactor.

The catalysed reaction is (2R)-2,3-dihydroxy-3-methylbutanoate + NADP(+) = (2S)-2-acetolactate + NADPH + H(+). It catalyses the reaction (2R,3R)-2,3-dihydroxy-3-methylpentanoate + NADP(+) = (S)-2-ethyl-2-hydroxy-3-oxobutanoate + NADPH + H(+). It participates in amino-acid biosynthesis; L-isoleucine biosynthesis; L-isoleucine from 2-oxobutanoate: step 2/4. It functions in the pathway amino-acid biosynthesis; L-valine biosynthesis; L-valine from pyruvate: step 2/4. Its function is as follows. Involved in the biosynthesis of branched-chain amino acids (BCAA). Catalyzes an alkyl-migration followed by a ketol-acid reduction of (S)-2-acetolactate (S2AL) to yield (R)-2,3-dihydroxy-isovalerate. In the isomerase reaction, S2AL is rearranged via a Mg-dependent methyl migration to produce 3-hydroxy-3-methyl-2-ketobutyrate (HMKB). In the reductase reaction, this 2-ketoacid undergoes a metal-dependent reduction by NADPH to yield (R)-2,3-dihydroxy-isovalerate. The polypeptide is Ketol-acid reductoisomerase (NADP(+)) (Staphylococcus haemolyticus (strain JCSC1435)).